Reading from the N-terminus, the 369-residue chain is Actin-related protein 2/3 complex subunit 1B-A (369 aa).

7 WD repeats span residues 6–45 (FLLE…WSKI), 50–89 (EHNG…WKPT), 94–135 (RINR…WVCK), 140–179 (PIRS…VEER), 200–239 (SSCG…RVTS), 242–282 (TDTL…LSFG), and 321–364 (LHKN…SAMK).

It belongs to the WD repeat ARPC1 family. Component of the Arp2/3 complex composed of actr2/arp2, actr3/arp3, arpc1 (arpc1a or arpc1b), arpc2, arpc3, arpc4 and arpc5.

It localises to the cytoplasm. It is found in the cytoskeleton. The protein resides in the nucleus. Its function is as follows. Component of the Arp2/3 complex, a multiprotein complex that mediates actin polymerization upon stimulation by nucleation-promoting factor (NPF). The Arp2/3 complex mediates the formation of branched actin networks in the cytoplasm, providing the force for cell motility. In addition to its role in the cytoplasmic cytoskeleton, the Arp2/3 complex also promotes actin polymerization in the nucleus, thereby regulating gene transcription and repair of damaged DNA. The Arp2/3 complex promotes homologous recombination (HR) repair in response to DNA damage by promoting nuclear actin polymerization, leading to drive motility of double-strand breaks (DSBs). The protein is Actin-related protein 2/3 complex subunit 1B-A (arpc1b-a) of Xenopus laevis (African clawed frog).